A 418-amino-acid chain; its full sequence is Gamma-glutamyl phosphate reductase (418 aa).

It belongs to the gamma-glutamyl phosphate reductase family.

Its subcellular location is the cytoplasm. The catalysed reaction is L-glutamate 5-semialdehyde + phosphate + NADP(+) = L-glutamyl 5-phosphate + NADPH + H(+). It participates in amino-acid biosynthesis; L-proline biosynthesis; L-glutamate 5-semialdehyde from L-glutamate: step 2/2. Functionally, catalyzes the NADPH-dependent reduction of L-glutamate 5-phosphate into L-glutamate 5-semialdehyde and phosphate. The product spontaneously undergoes cyclization to form 1-pyrroline-5-carboxylate. The chain is Gamma-glutamyl phosphate reductase from Citrifermentans bemidjiense (strain ATCC BAA-1014 / DSM 16622 / JCM 12645 / Bem) (Geobacter bemidjiensis).